The sequence spans 642 residues: MPCGEDWLSHPLGIVQGFFAQNGVNPDWEKKVIEYFKEKLKENNAPKWVPSLNEVPLHYLKPNSFVKFRCMIQDMFDPEFYMGVYETVNQNTKAHVLHFGKYRDVAECGPQQELDLNSPRNTTLERQTFYCVPVPGESTWVKEAYVNANQARVSPSTSYTPSRHKRSYEDDDDMDLQPNKQKDQHAGARQAGSVGGLQWCGEPKRLETEASTGQQLNSLNLSSPFDLNFPLPGEKGPACLVKVYEDWDCFKVNDILELYGILSVDPVLSILNNDERDASALLDPMECTDTAEEQRVHSPPASLVPRIHVILAQKLQHINPLLPACLNKEESKTCKFVSSFMSELSPVRAELLGFLTHALLGDSLAAEYLILHLISTVYTRRDVLPLGKFTVNLSGCPRNSTFTEHLYRIIQHLVPASFRLQMTIENMNHLKFIPHKDYTANRLVSGLLQLPSNTSLVIDETLLEQGQLDTPGVHNVTALSNLITWQKVDYDFSYHQMEFPCNINVFITSEGRSLLPADCQIHLQPQLIPPNMEEYMNSLLSAVLPSVLNKFRIYLTLLRFLEYSISDEITKAVEDDFVEMRKNDPQSITADDLHQLLVVARCLSLSAGQTTLSRERWLRAKQLESLRRTRLQQQKCVNGNEL.

The span at 151 to 161 (ARVSPSTSYTP) shows a compositional bias: polar residues. Residues 151–197 (ARVSPSTSYTPSRHKRSYEDDDDMDLQPNKQKDQHAGARQAGSVGGL) are disordered. Ser154 is modified (phosphoserine). Thr160 bears the Phosphothreonine mark. A phosphoserine mark is found at Ser167 and Ser298.

This sequence belongs to the MCMBP family. As to quaternary structure, interacts with the MCM complex: associates with the MCM3-7 complex which lacks MCM2, while it does not interact with the MCM complex when MCM2 is present (MCM2-7 complex). Interacts with the RPA complex, when composed of all RPA1, RPA2 and RPA3 components, but not with RPA1 or RPA2 alone.

It is found in the nucleus. Functionally, associated component of the MCM complex that acts as a regulator of DNA replication. Binds to the MCM complex during late S phase and promotes the disassembly of the MCM complex from chromatin, thereby acting as a key regulator of pre-replication complex (pre-RC) unloading from replicated DNA. Can dissociate the MCM complex without addition of ATP; probably acts by destabilizing interactions of each individual subunits of the MCM complex. Required for sister chromatid cohesion. The polypeptide is Mini-chromosome maintenance complex-binding protein (MCMBP) (Homo sapiens (Human)).